Here is a 468-residue protein sequence, read N- to C-terminus: Homocitrate synthase (468 aa).

Residues 11 to 266 (VGILDSTLRE…IEVVDLKKLS (256 aa)) form the Pyruvate carboxyltransferase domain. Arg-19 contacts 2-oxoglutarate. Glu-20 is a binding site for Mg(2+). Residues His-83, Arg-143, and Thr-177 each contribute to the 2-oxoglutarate site. Residues His-205 and His-207 each coordinate Mg(2+). His-299 (proton acceptor) is an active-site residue.

Belongs to the alpha-IPM synthase/homocitrate synthase family. Homocitrate synthase LYS20/LYS21 subfamily. Requires Mg(2+) as cofactor. Mn(2+) serves as cofactor.

The enzyme catalyses acetyl-CoA + 2-oxoglutarate + H2O = (2R)-homocitrate + CoA + H(+). It participates in amino-acid biosynthesis; L-lysine biosynthesis via AAA pathway; L-alpha-aminoadipate from 2-oxoglutarate: step 1/5. Inhibited by lysine. Catalyzes the aldol-type condensation of 2-oxoglutarate with acetyl-CoA to yield homocitrate. Carries out the first step of the alpha-aminoadipate (AAA) lysine biosynthesis pathway. Does not display 2-isopropylmalate synthase and citramalate synthase activities since it cannot use 2-oxoisovalerate or pyruvate as substrate. In Sulfolobus acidocaldarius (strain ATCC 33909 / DSM 639 / JCM 8929 / NBRC 15157 / NCIMB 11770), this protein is Homocitrate synthase.